The primary structure comprises 435 residues: WD repeat domain phosphoinositide-interacting protein 2 (435 aa).

The WD 1 repeat unit spans residues 182–222; sequence AHDSPLAALAFDASGTKLATASEKGTVIRVFSIPEGQKLFE. Positions 223-226 match the L/FRRG motif motif; the sequence is FRRG. WD repeat units lie at residues 228 to 267 and 311 to 349; these read KRCV…EKPP and GHKN…GGEC. A disordered region spans residues 386 to 435; sequence VTKTYPPPSPTRHAYADDLGAVGGASEEDEMGNLRLDEDNENPPMILQTE.

Belongs to the WD repeat PROPPIN family.

It is found in the preautophagosomal structure membrane. Functionally, component of the autophagy machinery that controls the major intracellular degradation process by which cytoplasmic materials are packaged into autophagosomes and delivered to lysosomes for degradation. Involved in an early step of the formation of preautophagosomal structures. This Xenopus laevis (African clawed frog) protein is WD repeat domain phosphoinositide-interacting protein 2 (wipi2).